A 206-amino-acid chain; its full sequence is Large ribosomal subunit protein uL13x (206 aa).

This sequence belongs to the universal ribosomal protein uL13 family.

The sequence is that of Large ribosomal subunit protein uL13x (RPL13AC) from Arabidopsis thaliana (Mouse-ear cress).